The following is a 290-amino-acid chain: Lipoyl synthase (290 aa).

The [4Fe-4S] cluster site is built by Cys-44, Cys-49, Cys-55, Cys-70, Cys-74, Cys-77, and Ser-281. The Radical SAM core domain maps to 56–270 (WRCGTATFMI…KQIGLEKGFS (215 aa)).

This sequence belongs to the radical SAM superfamily. Lipoyl synthase family. [4Fe-4S] cluster serves as cofactor.

Its subcellular location is the cytoplasm. The enzyme catalyses [[Fe-S] cluster scaffold protein carrying a second [4Fe-4S](2+) cluster] + N(6)-octanoyl-L-lysyl-[protein] + 2 oxidized [2Fe-2S]-[ferredoxin] + 2 S-adenosyl-L-methionine + 4 H(+) = [[Fe-S] cluster scaffold protein] + N(6)-[(R)-dihydrolipoyl]-L-lysyl-[protein] + 4 Fe(3+) + 2 hydrogen sulfide + 2 5'-deoxyadenosine + 2 L-methionine + 2 reduced [2Fe-2S]-[ferredoxin]. Its pathway is protein modification; protein lipoylation via endogenous pathway; protein N(6)-(lipoyl)lysine from octanoyl-[acyl-carrier-protein]: step 2/2. In terms of biological role, catalyzes the radical-mediated insertion of two sulfur atoms into the C-6 and C-8 positions of the octanoyl moiety bound to the lipoyl domains of lipoate-dependent enzymes, thereby converting the octanoylated domains into lipoylated derivatives. The chain is Lipoyl synthase from Treponema denticola (strain ATCC 35405 / DSM 14222 / CIP 103919 / JCM 8153 / KCTC 15104).